The sequence spans 732 residues: Interleukin-31 receptor subunit alpha (732 aa).

Positions methionine 1–alanine 19 are cleaved as a signal peptide. At alanine 20 to glutamate 519 the chain is on the extracellular side. Fibronectin type-III domains are found at residues lysine 24–threonine 122, proline 124–glutamate 225, glutamate 223–threonine 315, proline 319–alanine 416, and proline 421–phenylalanine 515. N-linked (GlcNAc...) asparagine glycans are attached at residues asparagine 37, asparagine 67, asparagine 93, asparagine 166, asparagine 187, asparagine 277, asparagine 283, asparagine 395, asparagine 455, and asparagine 504. The helical transmembrane segment at isoleucine 520–alanine 540 threads the bilayer. Residues tyrosine 541 to valine 732 are Cytoplasmic-facing.

The protein belongs to the type I cytokine receptor family. Type 2 subfamily. In terms of assembly, heterodimer with OSMR. Interacts with JAK1 and STAT3. N-glycosylated. As to expression, expressed in CD14- and CD56-positive blood cells. Expressed in macrophages. Expressed in keratinocytes. Expressed in a subset of dorsal root ganglia neurons (at protein level). Expressed at low levels in testis, ovary, brain, prostate, placenta, thymus, bone marrow, trachea and skin. Expressed in bronchial and alveolar epithelial cells and pulmonary fibroblasts. Detected in all of the myelomonocytic lineage. Isoform 6: Expressed at higher levels in lesional skin compared to healthy skin of atopic dermatitis patients.

It localises to the cell membrane. Its subcellular location is the presynaptic cell membrane. It is found in the cell projection. The protein resides in the axon. Its function is as follows. Associates with OSMR to form the interleukin-31 receptor which activates STAT3 and to a lower extent STAT1 and STAT5. May function in skin immunity. Mediates IL31-induced itch, probably in a manner dependent on cation channels TRPA1 and TRPV1. Positively regulates numbers and cycling status of immature subsets of myeloid progenitor cells in bone marrow in vivo and enhances myeloid progenitor cell survival in vitro. The chain is Interleukin-31 receptor subunit alpha (IL31RA) from Homo sapiens (Human).